Consider the following 441-residue polypeptide: GPI mannosyltransferase 2 (441 aa).

Helical transmembrane passes span Met-4–Val-24, Ile-35–Gly-55, Leu-115–Gly-135, Leu-143–Pro-163, Gly-165–Leu-185, Leu-199–Phe-223, Val-249–Phe-269, Tyr-306–Leu-326, Leu-361–Ile-381, and Val-418–Leu-438.

It belongs to the PIGV family.

It localises to the endoplasmic reticulum membrane. Its pathway is glycolipid biosynthesis; glycosylphosphatidylinositol-anchor biosynthesis. Mannosyltransferase involved in glycosylphosphatidylinositol-anchor biosynthesis. Transfers the second mannose to the glycosylphosphatidylinositol during GPI precursor assembly. This chain is GPI mannosyltransferase 2 (gpi18), found in Aspergillus fumigatus (strain ATCC MYA-4609 / CBS 101355 / FGSC A1100 / Af293) (Neosartorya fumigata).